Consider the following 782-residue polypeptide: CHFKHRKQRFVDIGDSLLTLKLTHALSSSVQNFPSDAIKILNRLEELDLSNNRLRNVPDNSFHFLRSLKKVHLQDNTIEMIHRGTFQGDIHRDLTEVYFSFNSVRNVQQHTFADLIQLEQIHLDDNRIESLERRAFMNLKSLKRLNLKGNKIATIAYETFQNLPELEDLDLAYNSISSLDFNIFDQVGSLGMFHVNMSHNKLINLVVAPSVPFEQDTGLGGLQNIKVLDLSFNNITSVAKQFFRPVELSLMQLYLGHNKLLNATKDLFGNMPHLQVLDLSHNSLYELDFDTFRNTKKLQWLDTSHNRISEIPNDLFRFLGNLRIVDFSHNRLRSLPDNLFRETGLERLDVSHNLLGKLPLTSLSLASAQTLSELDLSWNSISSLSHGGQLARFKCLSWLDLSYNRLGQIDAGTFKGIPRLASLNLGHNSQLTLEINGLSFQGLEYTLLHLNLDNVSLSQVPALSTPNLLSLSLAFNSLPTVALEVAGNISSLRYLNLDYNDLSAVPIVTHSLTELRHLSLEGNPITTLSNTSLLGAANQLEELNLKNIDLTVLESGAFCKMQPLRTLKIGVYRNIKNFNIPSILQFNDGLKNLEIHVTKDTDTLDNEMRGAWPLKLQNLTLSGKGLKKITGKMFQGVRSPTFHLTVRNTSIIKIPFDVFRNMLPVRNVSVDVRDNILLKNLQNPSTGSKPGKPRSAFLTDLKLMGGKWSCDCDLGWVEVWERKRRQYLCPVLLRVSILRNIIVGTLMMVLGTGCVRIKITGVWLKFLRVILSVVGVKLRWRN.

LRR repeat units follow at residues 16 to 37 (SLLT…PSDA), 43 to 64 (RLEE…SFHF), 67 to 88 (SLKK…TFQG), 93 to 114 (DLTE…TFAD), 117 to 138 (QLEQ…AFMN), 141 to 162 (SLKR…TFQN), 165 to 186 (ELED…IFDQ), 191 to 212 (GMFH…PSVP), 224 to 245 (NIKV…FFRP), 249 to 270 (SLMQ…LFGN), 273 to 294 (HLQV…TFRN), 297 to 318 (KLQW…LFRF), 321 to 342 (NLRI…LFRE), 344 to 364 (GLER…TSLS), 370 to 391 (TLSE…GQLA), 395 to 416 (CLSW…TFKG), 419 to 442 (RLAS…SFQG), 446 to 467 (TLLH…STPN), 468 to 488 (LLSL…VAGN), 491 to 512 (SLRY…THSL), 514 to 535 (ELRH…SLLG), and 539 to 560 (QLEE…AFCK). N-linked (GlcNAc...) asparagine glycans are attached at residues Asn-196, Asn-234, and Asn-262. Residues Asn-454 and Asn-488 are each glycosylated (N-linked (GlcNAc...) asparagine). The N-linked (GlcNAc...) asparagine glycan is linked to Asn-530. N-linked (GlcNAc...) asparagine glycosylation is found at Asn-618, Asn-648, and Asn-667.

It belongs to the chaoptin family.

It is found in the cell membrane. In terms of biological role, required for photoreceptor cell morphogenesis. Mediates homophilic cellular adhesion. The chain is Chaoptin (CHP) from Tribolium castaneum (Red flour beetle).